The sequence spans 704 residues: Ion-translocating oxidoreductase complex subunit C (704 aa).

4Fe-4S ferredoxin-type domains are found at residues 368–397 (MGAP…QQLY) and 407–436 (KATA…VQYF). Cysteine 377, cysteine 380, cysteine 383, cysteine 387, cysteine 416, cysteine 419, cysteine 422, and cysteine 426 together coordinate [4Fe-4S] cluster. The tract at residues 536-684 (RAKQAAHPMA…PADPRKAAVA (149 aa)) is disordered. Low complexity predominate over residues 556–565 (KAAVEAAIAR).

Belongs to the 4Fe4S bacterial-type ferredoxin family. RnfC subfamily. The complex is composed of six subunits: RsxA, RsxB, RsxC, RsxD, RsxE and RsxG. [4Fe-4S] cluster serves as cofactor.

The protein resides in the cell inner membrane. In terms of biological role, part of a membrane-bound complex that couples electron transfer with translocation of ions across the membrane. Required to maintain the reduced state of SoxR. The chain is Ion-translocating oxidoreductase complex subunit C from Salmonella choleraesuis (strain SC-B67).